Here is a 265-residue protein sequence, read N- to C-terminus: Tryptophan synthase alpha chain (265 aa).

Residues Glu49 and Asp60 each act as proton acceptor in the active site.

The protein belongs to the TrpA family. Tetramer of two alpha and two beta chains.

It catalyses the reaction (1S,2R)-1-C-(indol-3-yl)glycerol 3-phosphate + L-serine = D-glyceraldehyde 3-phosphate + L-tryptophan + H2O. It functions in the pathway amino-acid biosynthesis; L-tryptophan biosynthesis; L-tryptophan from chorismate: step 5/5. Functionally, the alpha subunit is responsible for the aldol cleavage of indoleglycerol phosphate to indole and glyceraldehyde 3-phosphate. This Desulfosudis oleivorans (strain DSM 6200 / JCM 39069 / Hxd3) (Desulfococcus oleovorans) protein is Tryptophan synthase alpha chain.